Consider the following 308-residue polypeptide: Cytochrome b (308 aa).

The next 4 membrane-spanning stretches (helical) occupy residues 1–21 (FGSLLGICLVTQIITGLLLAT), 45–66 (WLIRNLHANGASFFFICIYLHI), 81–101 (WNTGVILLLTLMATAFVGYVL), and 146–166 (FFALHFLLPFVIAGITLVHLT). Heme b is bound by residues H51 and H65. H150 and H164 together coordinate heme b. H169 is a binding site for a ubiquinone. The next 3 membrane-spanning stretches (helical) occupy residues 194 to 214 (MKDILGFALLFIALVAMALFS), 256 to 276 (LGGVLALAASVLVLFLIPLLH), and 288 to 308 (LSQILFWTLVANLLVLTWVGS).

It belongs to the cytochrome b family. As to quaternary structure, the cytochrome bc1 complex contains 11 subunits: 3 respiratory subunits (MT-CYB, CYC1 and UQCRFS1), 2 core proteins (UQCRC1 and UQCRC2) and 6 low-molecular weight proteins (UQCRH/QCR6, UQCRB/QCR7, UQCRQ/QCR8, UQCR10/QCR9, UQCR11/QCR10 and a cleavage product of UQCRFS1). This cytochrome bc1 complex then forms a dimer. It depends on heme b as a cofactor.

The protein resides in the mitochondrion inner membrane. Its function is as follows. Component of the ubiquinol-cytochrome c reductase complex (complex III or cytochrome b-c1 complex) that is part of the mitochondrial respiratory chain. The b-c1 complex mediates electron transfer from ubiquinol to cytochrome c. Contributes to the generation of a proton gradient across the mitochondrial membrane that is then used for ATP synthesis. This Amblyornis macgregoriae (Macgregor's bowerbird) protein is Cytochrome b (MT-CYB).